The following is a 273-amino-acid chain: Dermonecrotic toxin LspaSicTox-alphaIA2iii (273 aa).

His-5 is an active-site residue. Positions 25 and 27 each coordinate Mg(2+). His-41 serves as the catalytic Nucleophile. 2 cysteine pairs are disulfide-bonded: Cys-45-Cys-51 and Cys-47-Cys-190. Residue Asp-85 coordinates Mg(2+).

Belongs to the arthropod phospholipase D family. Class II subfamily. Mg(2+) is required as a cofactor. Expressed by the venom gland.

It is found in the secreted. The catalysed reaction is an N-(acyl)-sphingosylphosphocholine = an N-(acyl)-sphingosyl-1,3-cyclic phosphate + choline. It catalyses the reaction an N-(acyl)-sphingosylphosphoethanolamine = an N-(acyl)-sphingosyl-1,3-cyclic phosphate + ethanolamine. It carries out the reaction a 1-acyl-sn-glycero-3-phosphocholine = a 1-acyl-sn-glycero-2,3-cyclic phosphate + choline. The enzyme catalyses a 1-acyl-sn-glycero-3-phosphoethanolamine = a 1-acyl-sn-glycero-2,3-cyclic phosphate + ethanolamine. Dermonecrotic toxins cleave the phosphodiester linkage between the phosphate and headgroup of certain phospholipids (sphingolipid and lysolipid substrates), forming an alcohol (often choline) and a cyclic phosphate. This toxin acts on sphingomyelin (SM). It may also act on ceramide phosphoethanolamine (CPE), lysophosphatidylcholine (LPC) and lysophosphatidylethanolamine (LPE), but not on lysophosphatidylserine (LPS), and lysophosphatidylglycerol (LPG). It acts by transphosphatidylation, releasing exclusively cyclic phosphate products as second products. Induces dermonecrosis, hemolysis, increased vascular permeability, edema, inflammatory response, and platelet aggregation. The polypeptide is Dermonecrotic toxin LspaSicTox-alphaIA2iii (Loxosceles spadicea (Recluse spider)).